Consider the following 495-residue polypeptide: Glycerol kinase (495 aa).

T14 serves as a coordination point for ADP. 3 residues coordinate ATP: T14, T15, and S16. T14 provides a ligand contact to sn-glycerol 3-phosphate. R18 contacts ADP. Sn-glycerol 3-phosphate is bound by residues R84, E85, Y136, and D246. Positions 84, 85, 136, 246, and 247 each coordinate glycerol. T268 and G312 together coordinate ADP. The ATP site is built by T268, G312, Q316, and G413. ADP is bound by residues G413 and N417.

It belongs to the FGGY kinase family.

It catalyses the reaction glycerol + ATP = sn-glycerol 3-phosphate + ADP + H(+). The protein operates within polyol metabolism; glycerol degradation via glycerol kinase pathway; sn-glycerol 3-phosphate from glycerol: step 1/1. With respect to regulation, inhibited by fructose 1,6-bisphosphate (FBP). In terms of biological role, key enzyme in the regulation of glycerol uptake and metabolism. Catalyzes the phosphorylation of glycerol to yield sn-glycerol 3-phosphate. The polypeptide is Glycerol kinase (Bdellovibrio bacteriovorus (strain ATCC 15356 / DSM 50701 / NCIMB 9529 / HD100)).